The chain runs to 863 residues: DNA mismatch repair protein MutS 2 (863 aa).

626 to 633 serves as a coordination point for ATP; sequence GPNMSGKS.

It belongs to the DNA mismatch repair MutS family.

Its function is as follows. This protein is involved in the repair of mismatches in DNA. It is possible that it carries out the mismatch recognition step. This protein has a weak ATPase activity. This chain is DNA mismatch repair protein MutS 2 (mutS2), found in Halobacterium salinarum (strain ATCC 700922 / JCM 11081 / NRC-1) (Halobacterium halobium).